Reading from the N-terminus, the 2013-residue chain is Centrosomal protein 224 (2013 aa).

5 HEAT repeats span residues 115-153 (TIEADSAEPVVEALLKGTSSTSPKILLASLAALTQALKT), 158-196 (QIPVKLILKQFSPWFENRDKGIRDQASELFIEIYRWIGK), 200-238 (PLISEALTPIQLKALQDQFEKLPTDPAVPLKYTRSEAAK), 348-386 (TSYVKPFITPILEKFKEKKTSVLQSVHTTMDSLVGKSIS), and 427-465 (TKVTKQLTKIFMEALNDTDSNIRDNASKAFAALGGIIGE). The tract at residues 512 to 557 (PVSSSNKKPAAATGNSKSSSTTTPTGRSSNSSPLPPPPSSSDDIKN) is disordered. Residues 524–543 (TGNSKSSSTTTPTGRSSNSS) are compositionally biased toward low complexity. HEAT repeat units lie at residues 724–762 (IQQLKPLLDYTKQCLESTNPDVKKSAIKLLCTIKINIGA), 816–854 (VDISVKLTPAIITNLSDANWKTRSDALDEIERIIIDANR), 857–895 (QPKLGGLIPALKNRLTDNNQKCTITTLNIIGMLSQAMGG), 899–937 (EKHARLLIPGILLLLGDSKKPVRDAVISCMNVIVQSDLG), and 977–1015 (PSEINTLAKGIISCLQDKSAEIRSLADNLLSILCTQIPL). The segment at 1043 to 1109 (KTGQPIPPPS…QQQQRRSILQ (67 aa)) is disordered. A compositionally biased stretch (low complexity) spans 1053-1106 (KTKQSTSSSSSSSSTTSQQSSTPSSPQPIRQQQQQQQQQPTQPQQQQQQQQRRS). 3 HEAT repeats span residues 1240-1279 (EYEASCLVPILLEKSGSATNEQIKQIFKQSIQQLEELCLP), 1281-1314 (VLFRFAIEMVTSQNWRTRVEVLNVMASIIDKNGA), and 1317-1353 (CGNLKVVIPLITQNLNDSQSKQSSLLCLNKLYSHIKD). Low complexity-rich tracts occupy residues 1372-1406 (NNNNNNNNNNNNNNNNNNNNVQQQQQQQQQQQQQQ), 1695-1735 (NRIS…INSS), and 1746-1796 (SNNT…TLST). 4 disordered regions span residues 1372-1413 (NNNN…SLST), 1695-1809 (NRIS…YSGK), 1905-1949 (NQPS…IAPQ), and 1966-1995 (TLNPDQNSGSNNNNSHQNSPSTSSSNDLNS). The span at 1799–1809 (INKEPRDYSGK) shows a compositional bias: basic and acidic residues. Residues 1913–1939 (NNNNNNNNNNNNNNNNNINNNNNNNNN) show a composition bias toward low complexity. The span at 1940–1949 (SGGNENIAPQ) shows a compositional bias: polar residues. Low complexity predominate over residues 1967-1995 (LNPDQNSGSNNNNSHQNSPSTSSSNDLNS).

This sequence belongs to the TOG/XMAP215 family. In terms of assembly, interacts with eb1 at the microtubule tip, centrosome and kinetochore. Interacts with lis1 in the cortical attachment of microtubules.

It localises to the cytoplasm. It is found in the cytoskeleton. Its subcellular location is the microtubule organizing center. The protein resides in the centrosome. The protein localises to the chromosome. It localises to the centromere. It is found in the kinetochore. Involved in regulation of microtubule dynamics. Regulates the interaction of microtubules tips with the centrosome and cell cortex. In Dictyostelium discoideum (Social amoeba), this protein is Centrosomal protein 224 (mtaA).